The following is a 220-amino-acid chain: Endonuclease NucS (220 aa).

Belongs to the NucS endonuclease family.

The protein resides in the cytoplasm. Functionally, cleaves both 3' and 5' ssDNA extremities of branched DNA structures. This chain is Endonuclease NucS, found in Frankia alni (strain DSM 45986 / CECT 9034 / ACN14a).